Consider the following 1122-residue polypeptide: Histone deacetylase 5 (1122 aa).

Residues M1–S24 form a disordered region. A Glycyl lysine isopeptide (Lys-Gly) (interchain with G-Cter in SUMO2) cross-link involves residue K35. Disordered stretches follow at residues A41–R60 and K196–L281. The span at D247–A258 shows a compositional bias: basic and acidic residues. A Phosphoserine; by AMPK, CaMK1, SIK1 and PKD/PRKD1 modification is found at S259. Positions K272 to L281 are enriched in basic and acidic residues. T292 is modified (phosphothreonine; by PKC). Disordered regions lie at residues G302 to T343 and M481 to S504. The span at N312–S327 shows a compositional bias: low complexity. Over residues T328 to N340 the composition is skewed to polar residues. Residues S494–S504 are compositionally biased toward low complexity. The residue at position 498 (S498) is a Phosphoserine; by AMPK, CaMK1, SIK1 and PKD/PRKD1. K533 carries the post-translational modification N6-acetyllysine. The interval T536 to G625 is disordered. Acidic residues predominate over residues S581–E621. Phosphoserine occurs at positions 611 and 661. The tract at residues G684–Q1028 is histone deacetylase. C696, C698, H704, and C781 together coordinate Zn(2+). Residue H833 is part of the active site. The Nuclear export signal motif lies at E1081–L1122. The tract at residues E1097 to L1122 is disordered. A compositionally biased stretch (basic and acidic residues) spans A1104–E1113. The residue at position 1108 (S1108) is a Phosphoserine.

This sequence belongs to the histone deacetylase family. HD type 2 subfamily. As to quaternary structure, interacts with AHRR, BAHD1, BCOR, HDAC7, HDAC9, CTBP1, MEF2C, NCOR2, NRIP1, PHB2 and a 14-3-3 chaperone protein. Interacts with BCL6, DDIT3/CHOP, GRK5, KDM5B and MYOCD. Interacts with EP300 in the presence of TFAP2C. Interacts with ANKRA2. Interacts with CUL7 (as part of the 3M complex); negatively regulated by ANKRA2. Interacts with ZBTB7B; the interaction allows the recruitment of HDAC4 on CD8 loci for deacetylation and possible inhibition of CD8 genes expression. Interacts with RARA. In terms of processing, phosphorylated by AMPK, CaMK1, SIK1 and PRKD1 at Ser-259 and Ser-498. The phosphorylation is required for the export to the cytoplasm and inhibition. Phosphorylated by the PKC kinases PKN1 and PKN2, impairing nuclear import. Phosphorylated by GRK5, leading to nuclear export of HDAC5 and allowing MEF2-mediated transcription. Post-translationally, ubiquitinated. Polyubiquitination however does not lead to its degradation. In terms of tissue distribution, ubiquitous.

The protein localises to the nucleus. Its subcellular location is the cytoplasm. The catalysed reaction is N(6)-acetyl-L-lysyl-[histone] + H2O = L-lysyl-[histone] + acetate. Responsible for the deacetylation of lysine residues on the N-terminal part of the core histones (H2A, H2B, H3 and H4). Histone deacetylation gives a tag for epigenetic repression and plays an important role in transcriptional regulation, cell cycle progression and developmental events. Histone deacetylases act via the formation of large multiprotein complexes. Involved in muscle maturation by repressing transcription of myocyte enhancer MEF2C. During muscle differentiation, it shuttles into the cytoplasm, allowing the expression of myocyte enhancer factors. Involved in the MTA1-mediated epigenetic regulation of ESR1 expression in breast cancer. Serves as a corepressor of RARA and causes its deacetylation. In association with RARA, plays a role in the repression of microRNA-10a and thereby in the inflammatory response. The polypeptide is Histone deacetylase 5 (HDAC5) (Homo sapiens (Human)).